The sequence spans 204 residues: Kunitz type trypsin inhibitor 106 (204 aa).

A signal peptide spans 1 to 26; that stretch reads MSMRLSIRTLIILAHVCLFITTTTIA. A glycan (N-linked (GlcNAc...) asparagine) is linked at asparagine 62. A disulfide bridge connects residues cysteine 65 and cysteine 112. An N-linked (GlcNAc...) asparagine glycan is attached at asparagine 141. 2 disulfides stabilise this stretch: cysteine 164/cysteine 176 and cysteine 169/cysteine 172.

The protein belongs to the protease inhibitor I3 (leguminous Kunitz-type inhibitor) family. As to quaternary structure, interacts with SCP1 and CP. Expressed at low levels in non-mycorrhizal roots.

It is found in the secreted. The protein localises to the extracellular space. It localises to the apoplast. Protease inhibitor that, together with SCP1, controls mycorrhiza establishment and arbuscule development during root colonization by arbuscular mycorrhizal (AM) fungi (e.g. Rhizophagus irregularis), probably by degrading SCP1 in the apoplast of the periarbuscular region. This is Kunitz type trypsin inhibitor 106 from Medicago truncatula (Barrel medic).